Reading from the N-terminus, the 156-residue chain is Transcription antitermination protein NusB (156 aa).

Belongs to the NusB family.

Functionally, involved in transcription antitermination. Required for transcription of ribosomal RNA (rRNA) genes. Binds specifically to the boxA antiterminator sequence of the ribosomal RNA (rrn) operons. The protein is Transcription antitermination protein NusB of Rickettsia conorii (strain ATCC VR-613 / Malish 7).